The following is a 120-amino-acid chain: Small ribosomal subunit protein bS16 (120 aa).

Residues glycine 80 to alanine 120 form a disordered region. The span at leucine 81–proline 90 shows a compositional bias: basic residues. Basic and acidic residues-rich tracts occupy residues histidine 91–glutamate 101 and alanine 109–alanine 120.

It belongs to the bacterial ribosomal protein bS16 family.

This chain is Small ribosomal subunit protein bS16, found in Bartonella bacilliformis (strain ATCC 35685 / KC583 / Herrer 020/F12,63).